Here is a 450-residue protein sequence, read N- to C-terminus: Solute carrier family 52, riboflavin transporter, member 2 (450 aa).

A run of 5 helical transmembrane segments spans residues Leu-14 to Leu-34, Leu-47 to Leu-67, Ile-79 to Trp-99, Phe-114 to Leu-136, and Phe-147 to Val-167. Residue Asn-178 is glycosylated (N-linked (GlcNAc...) asparagine). Residues Phe-201–Leu-221 form a helical membrane-spanning segment. The interval Ala-230–Ser-268 is disordered. The segment covering Gly-242 to Ala-252 has biased composition (acidic residues). 5 helical membrane-spanning segments follow: residues Ala-282–Val-302, Leu-317–Leu-337, Leu-344–Leu-364, Val-371–Phe-391, and Ala-409–Phe-429.

The protein belongs to the riboflavin transporter family. Highly expressed in the placenta and small intestine, moderately in the kidney, colon, lung, prostate, uterus, and thymus, and weakly in all other tissues.

The protein resides in the cell membrane. The catalysed reaction is riboflavin(in) = riboflavin(out). Riboflavin transport is Na(+)-independent but moderately pH-sensitive. Activity is strongly inhibited by riboflavin analogs, such as lumiflavin. Weakly inhibited by flavin adenine dinucleotide (FAD) and flavin mononucleotide (FMN). Functionally, plasma membrane transporter mediating the uptake by cells of the water soluble vitamin B2/riboflavin that plays a key role in biochemical oxidation-reduction reactions of the carbohydrate, lipid, and amino acid metabolism. May also act as a receptor for 4-hydroxybutyrate. The sequence is that of Solute carrier family 52, riboflavin transporter, member 2 (Slc52a2) from Rattus norvegicus (Rat).